The following is a 362-amino-acid chain: Molybdenum import ATP-binding protein ModC (362 aa).

Residues 2-236 (ASPIEVRLQM…LDLPLAMGSD (235 aa)) form the ABC transporter domain. Residue 34 to 41 (GPSGSGKT) participates in ATP binding. The 66-residue stretch at 297 to 362 (QSSILNRLPV…AQIKAVAVLA (66 aa)) folds into the Mop domain.

Belongs to the ABC transporter superfamily. Molybdate importer (TC 3.A.1.8) family. In terms of assembly, the complex is composed of two ATP-binding proteins (ModC), two transmembrane proteins (ModB) and a solute-binding protein (ModA).

The protein resides in the cell inner membrane. It catalyses the reaction molybdate(out) + ATP + H2O = molybdate(in) + ADP + phosphate + H(+). In terms of biological role, part of the ABC transporter complex ModABC involved in molybdenum import. Responsible for energy coupling to the transport system. The sequence is that of Molybdenum import ATP-binding protein ModC from Pseudomonas syringae pv. syringae (strain B728a).